A 159-amino-acid chain; its full sequence is Small ribosomal subunit protein uS7m (159 aa).

This sequence belongs to the universal ribosomal protein uS7 family. Part of the small ribosomal subunit.

The protein localises to the mitochondrion. Functionally, one of the primary rRNA binding proteins, it binds directly to the small rRNA where it nucleates assembly of the head domain of the small subunit. The protein is Small ribosomal subunit protein uS7m (RPS7) of Reclinomonas americana.